The sequence spans 35 residues: Cytochrome c-550 (35 aa).

Residues cysteine 17, cysteine 20, and histidine 21 each coordinate heme c.

Post-translationally, binds 1 heme c group covalently per subunit.

Functionally, monoheme cytochrome which functions as an electron carrier in the reduction of nitrite by membrane vesicles. In Virgibacillus halodenitrificans (Bacillus halodenitrificans), this protein is Cytochrome c-550.